The sequence spans 153 residues: Large ribosomal subunit protein uL30 (153 aa).

This sequence belongs to the universal ribosomal protein uL30 family. In terms of assembly, part of the 50S ribosomal subunit.

The chain is Large ribosomal subunit protein uL30 from Methanosarcina barkeri (strain Fusaro / DSM 804).